Reading from the N-terminus, the 1279-residue chain is Myosin-1 (1279 aa).

A compositionally biased stretch (basic residues) spans 1–12 (MAIVKRGGRTRA). Residues 1 to 25 (MAIVKRGGRTRAKQQQAPAKVNNGL) form a disordered region. A Myosin motor domain is found at 48 to 736 (VGVSDLTLLS…TLFALEDMRD (689 aa)). 141–148 (GESGAGKT) lines the ATP pocket. Residue Ser371 is modified to Phosphoserine. Positions 419–502 (SIGILDIYGF…PGLFAALNDS (84 aa)) are actin-binding. IQ domains are found at residues 740–760 (HNMA…KEDA) and 761–786 (AKTI…YGNS). The TH1 domain maps to 794–984 (RRRFSMLGSR…SGTVTVNQGL (191 aa)). Polar residues-rich tracts occupy residues 980–989 (VNQGLPPTSK) and 1018–1027 (AFQSQPTASY). 4 disordered regions span residues 980-1001 (VNQG…LGKV), 1014-1132 (LAQP…PKHP), 1189-1216 (SPSA…SSNT), and 1253-1279 (LADA…DDDW). Low complexity-rich tracts occupy residues 1038 to 1056 (TQLY…PTRT) and 1067 to 1095 (STQT…KKIA). The segment covering 1116-1126 (APPPPPPPPAL) has biased composition (pro residues). Residues 1129-1189 (PKHPTYRAMY…PIDYLQEESS (61 aa)) enclose the SH3 domain. Polar residues predominate over residues 1189-1209 (SPSASAATQSYAPTTASSNPV). Residues 1268–1279 (SDAEDDDDDDDW) are compositionally biased toward acidic residues.

This sequence belongs to the TRAFAC class myosin-kinesin ATPase superfamily. Myosin family. Post-translationally, phosphorylation of the TEDS site (Ser-371) is required for the polarization of the actin cytoskeleton. Phosphorylation probably activates the myosin-I ATPase activity.

The protein localises to the cytoplasm. The protein resides in the cytoskeleton. It localises to the actin patch. In terms of biological role, type-I myosin implicated in the organization of the actin cytoskeleton. Required for proper actin cytoskeleton polarization. At the cell cortex, assembles in patch-like structures together with proteins from the actin-polymerizing machinery and promotes actin assembly. Functions as actin nucleation-promoting factor (NPF) for the Arp2/3 complex. This is Myosin-1 (MYO1) from Lodderomyces elongisporus (strain ATCC 11503 / CBS 2605 / JCM 1781 / NBRC 1676 / NRRL YB-4239) (Yeast).